A 286-amino-acid chain; its full sequence is NFU1 iron-sulfur cluster scaffold homolog, mitochondrial (286 aa).

The N-terminal 66 residues, 1–66 (MSKLLTNTAL…RQIQLSGARN (66 aa)), are a transit peptide targeting the mitochondrion. Positions 182-250 (IKELLDTRIR…IPEVESVEQV (69 aa)) are nifU. Residues C219 and C222 each contribute to the [4Fe-4S] cluster site.

This sequence belongs to the NifU family.

It localises to the mitochondrion. Its function is as follows. Molecular scaffold for [Fe-S] cluster assembly of mitochondrial iron-sulfur proteins. This is NFU1 iron-sulfur cluster scaffold homolog, mitochondrial from Drosophila ananassae (Fruit fly).